A 141-amino-acid chain; its full sequence is Large ribosomal subunit protein uL11 (141 aa).

It belongs to the universal ribosomal protein uL11 family. As to quaternary structure, part of the ribosomal stalk of the 50S ribosomal subunit. Interacts with L10 and the large rRNA to form the base of the stalk. L10 forms an elongated spine to which L12 dimers bind in a sequential fashion forming a multimeric L10(L12)X complex. In terms of processing, one or more lysine residues are methylated.

Functionally, forms part of the ribosomal stalk which helps the ribosome interact with GTP-bound translation factors. The protein is Large ribosomal subunit protein uL11 of Streptococcus mutans serotype c (strain ATCC 700610 / UA159).